The primary structure comprises 426 residues: Glutamate-1-semialdehyde 2,1-aminomutase (426 aa).

N6-(pyridoxal phosphate)lysine is present on K265.

The protein belongs to the class-III pyridoxal-phosphate-dependent aminotransferase family. HemL subfamily. As to quaternary structure, homodimer. Pyridoxal 5'-phosphate serves as cofactor.

It is found in the cytoplasm. It catalyses the reaction (S)-4-amino-5-oxopentanoate = 5-aminolevulinate. The protein operates within porphyrin-containing compound metabolism; protoporphyrin-IX biosynthesis; 5-aminolevulinate from L-glutamyl-tRNA(Glu): step 2/2. The protein is Glutamate-1-semialdehyde 2,1-aminomutase of Escherichia coli (strain SMS-3-5 / SECEC).